We begin with the raw amino-acid sequence, 107 residues long: DNA polymerase delta subunit 4 (107 aa).

A PCNA-interaction protein motif (PIP box) motif is present at residues 1-16 (MGRKRLITDSYPVVKR). The tract at residues 1–44 (MGRKRLITDSYPVVKRREGPAGHSKGELAPELGEEPQPRDEEEA) is disordered. Basic and acidic residues predominate over residues 15-28 (KRREGPAGHSKGEL).

Belongs to the DNA polymerase delta subunit 4 family. As to quaternary structure, component of the tetrameric DNA polymerase delta complex (Pol-delta4), which consists of POLD1/p125, POLD2/p50, POLD3/p66/p68 and POLD4/p12, with POLD1 bearing DNA polymerase and 3' to 5' proofreading exonuclease activities. Within this complex, directly interacts with POLD1 and POLD2. Directly interacts with PCNA, as do POLD1 and POLD3; this interaction stimulates Pol-delta4 polymerase activity. As POLD1 and POLD2, directly interacts with WRNIP1; this interaction stimulates DNA polymerase delta-mediated DNA synthesis, independently of the presence of PCNA. This stimulation may be due predominantly to an increase of initiation frequency and also to increased processivity. Upon genotoxic stress induced by DNA damaging agents or by replication stress, POLD4 is proteolytically degraded and Pol-delta4 is converted into a trimeric form of the complex (Pol-delta3) which has an increased proofreading activity. The DNA polymerase delta complex interacts with POLDIP2; this interaction is probably mediated through direct binding to POLD2. Post-translationally, ubiquitinated; undergoes 'Lys-48'-linked ubiquitination in response to UV irradiation, leading to proteasomal degradation. This modification is partly mediated by RNF8 and by the DCX(DTL) E3 ubiquitin ligase complex (also called CRL4(CDT2)). Efficient degradation requires the presence of PCNA and is required for the inhibition of fork progression after DNA damage.

The protein localises to the nucleus. Its function is as follows. As a component of the tetrameric DNA polymerase delta complex (Pol-delta4), plays a role in high fidelity genome replication and repair. Within this complex, increases the rate of DNA synthesis and decreases fidelity by regulating POLD1 polymerase and proofreading 3' to 5' exonuclease activity. Pol-delta4 participates in Okazaki fragment processing, through both the short flap pathway, as well as a nick translation system. Under conditions of DNA replication stress, required for the repair of broken replication forks through break-induced replication (BIR), a mechanism that may induce segmental genomic duplications of up to 200 kb. Involved in Pol-delta4 translesion synthesis (TLS) of templates carrying O6-methylguanine or abasic sites. Its degradation in response to DNA damage is required for the inhibition of fork progression and cell survival. The protein is DNA polymerase delta subunit 4 (POLD4) of Homo sapiens (Human).